The following is a 307-amino-acid chain: Mitogen-activated protein kinase kinase 7 (307 aa).

Residues 45 to 303 form the Protein kinase domain; that stretch reads VEKLHVLGRG…ASQLLGHPFL (259 aa). Residues 51–59 and Lys74 contribute to the ATP site; that span reads LGRGSSGIV. Residue Asp165 is the Proton acceptor of the active site. Phosphoserine is present on residues Ser193 and Ser199. Thr203 is modified (phosphothreonine).

This sequence belongs to the protein kinase superfamily. STE Ser/Thr protein kinase family. MAP kinase kinase subfamily. Interacts with MPK15. Post-translationally, phosphorylation at Ser-193 and Ser-199 by MAP kinase kinase kinases positively regulates kinase activity. In terms of tissue distribution, expressed in all tissues, with a relatively higher level in leaves and lower level in roots and flowers.

The catalysed reaction is L-seryl-[protein] + ATP = O-phospho-L-seryl-[protein] + ADP + H(+). It catalyses the reaction L-threonyl-[protein] + ATP = O-phospho-L-threonyl-[protein] + ADP + H(+). The enzyme catalyses L-tyrosyl-[protein] + ATP = O-phospho-L-tyrosyl-[protein] + ADP + H(+). Functionally, may function as a negative regulator of polar auxin transport. Positively regulates plant basal and systemic acquired resistance (SAR). Activates MPK3 and MPK6 in vitro. This is Mitogen-activated protein kinase kinase 7 (MKK7) from Arabidopsis thaliana (Mouse-ear cress).